Reading from the N-terminus, the 427-residue chain is Pectin acetylesterase 5 (427 aa).

A signal peptide spans 1-35 (MAIPRFSSLLRCRKWAKSDWLVASIGCVLIVFFLS). An N-linked (GlcNAc...) asparagine glycan is attached at Asn-173. Active-site charge relay system residues include Ser-209, Asp-305, and His-372. Asn-391 carries an N-linked (GlcNAc...) asparagine glycan.

It belongs to the pectinacetylesterase family.

The protein resides in the secreted. Its subcellular location is the cell wall. Hydrolyzes acetyl esters in homogalacturonan regions of pectin. In type I primary cell wall, galacturonic acid residues of pectin can be acetylated at the O-2 and O-3 positions. Decreasing the degree of acetylation of pectin gels in vitro alters their physical properties. The chain is Pectin acetylesterase 5 from Arabidopsis thaliana (Mouse-ear cress).